The primary structure comprises 83 residues: Large ribosomal subunit protein bL27 (83 aa).

Belongs to the bacterial ribosomal protein bL27 family.

In Bifidobacterium adolescentis (strain ATCC 15703 / DSM 20083 / NCTC 11814 / E194a), this protein is Large ribosomal subunit protein bL27.